Consider the following 283-residue polypeptide: MAEITASLVKELRERTGAGMMDCKKALTEANGDIELAIENMRKSGAIKAAKKAGNVAADGVIKTKIDGNVAFILEVNCQTDFVAKDAGFQAFADKVLDAAVAGKITDVEVLKAQFEEERVALVAKIGENINIRRVASLEGDVLGSYQHGARIGVLVAAKGADEELVKQLAMHVAASKPEFVKPEDVSVDVVEKEYQVQLDIAMQSGKPKEIAEKMVEGRMKKFTGEVSLTGQPFVMEPSKSVGQLLKEHNADVTGFIRFEVGEGIEKVETDFAAEVAAMSKQS.

The interval 80 to 83 is involved in Mg(2+) ion dislocation from EF-Tu; sequence TDFV.

Belongs to the EF-Ts family.

The protein resides in the cytoplasm. Associates with the EF-Tu.GDP complex and induces the exchange of GDP to GTP. It remains bound to the aminoacyl-tRNA.EF-Tu.GTP complex up to the GTP hydrolysis stage on the ribosome. The protein is Elongation factor Ts of Salmonella paratyphi A (strain ATCC 9150 / SARB42).